We begin with the raw amino-acid sequence, 155 residues long: Ribosomal RNA large subunit methyltransferase H (155 aa).

S-adenosyl-L-methionine is bound by residues Leu-72, Gly-103, and 122 to 127; that span reads LSDLTL.

This sequence belongs to the RNA methyltransferase RlmH family. As to quaternary structure, homodimer.

Its subcellular location is the cytoplasm. The enzyme catalyses pseudouridine(1915) in 23S rRNA + S-adenosyl-L-methionine = N(3)-methylpseudouridine(1915) in 23S rRNA + S-adenosyl-L-homocysteine + H(+). Functionally, specifically methylates the pseudouridine at position 1915 (m3Psi1915) in 23S rRNA. This Acidovorax ebreus (strain TPSY) (Diaphorobacter sp. (strain TPSY)) protein is Ribosomal RNA large subunit methyltransferase H.